A 266-amino-acid chain; its full sequence is Transcription factor atoh8 (266 aa).

The disordered stretch occupies residues 140–164 (AASQAPAGGSERAESPRKRAGEPSG). A compositionally biased stretch (basic and acidic residues) spans 150-160 (ERAESPRKRAG). The segment at 175-188 (TRRLLANARERTRV) is basic motif; degenerate. The region spanning 175–227 (TRRLLANARERTRVHTISAAFEALRKQVPCYSYGQKLSKLAILRIACNYILSL) is the bHLH domain. The interval 189 to 227 (HTISAAFEALRKQVPCYSYGQKLSKLAILRIACNYILSL) is helix-loop-helix motif.

Its subcellular location is the nucleus. The protein localises to the nucleus speckle. The protein resides in the cytoplasm. Its function is as follows. Transcription factor that binds a palindromic (canonical) core consensus DNA sequence 5'-CANNTG- 3' known as an E-box element, possibly as a heterodimer with other bHLH proteins. During development, is required for heart looping and swim bladder formation by acting in concert with GATA4 and ZFPM1. During the development of both the retina and skeletal muscles is required for neural retinal cell through modulating PAX6 and NEUROG3 expression and myogenic differentiation. The protein is Transcription factor atoh8 of Danio rerio (Zebrafish).